Here is a 92-residue protein sequence, read N- to C-terminus: Small ribosomal subunit protein uS19c (92 aa).

The protein belongs to the universal ribosomal protein uS19 family.

It is found in the plastid. It localises to the chloroplast. Functionally, protein S19 forms a complex with S13 that binds strongly to the 16S ribosomal RNA. The polypeptide is Small ribosomal subunit protein uS19c (Eucalyptus globulus subsp. globulus (Tasmanian blue gum)).